We begin with the raw amino-acid sequence, 235 residues long: Large ribosomal subunit protein uL1 (235 aa).

Belongs to the universal ribosomal protein uL1 family. Part of the 50S ribosomal subunit.

Its function is as follows. Binds directly to 23S rRNA. The L1 stalk is quite mobile in the ribosome, and is involved in E site tRNA release. In terms of biological role, protein L1 is also a translational repressor protein, it controls the translation of the L11 operon by binding to its mRNA. The chain is Large ribosomal subunit protein uL1 from Synechococcus sp. (strain WH7803).